A 134-amino-acid chain; its full sequence is Ribosome-binding factor A (134 aa).

Belongs to the RbfA family. As to quaternary structure, monomer. Binds 30S ribosomal subunits, but not 50S ribosomal subunits or 70S ribosomes.

It is found in the cytoplasm. Its function is as follows. One of several proteins that assist in the late maturation steps of the functional core of the 30S ribosomal subunit. Associates with free 30S ribosomal subunits (but not with 30S subunits that are part of 70S ribosomes or polysomes). Required for efficient processing of 16S rRNA. May interact with the 5'-terminal helix region of 16S rRNA. This Bdellovibrio bacteriovorus (strain ATCC 15356 / DSM 50701 / NCIMB 9529 / HD100) protein is Ribosome-binding factor A.